The following is a 121-amino-acid chain: Protein TCL1B5 (121 aa).

The protein belongs to the TCL1 family.

The sequence is that of Protein TCL1B5 (Tcl1b5) from Mus musculus (Mouse).